Here is a 208-residue protein sequence, read N- to C-terminus: Large ribosomal subunit protein uL3 (208 aa).

The interval 130–168 (GGSKTHGQSDRLRAPGSVGGSSFPSRTFKGQRMAGRKGS) is disordered.

Belongs to the universal ribosomal protein uL3 family. In terms of assembly, part of the 50S ribosomal subunit. Forms a cluster with proteins L14 and L19.

Functionally, one of the primary rRNA binding proteins, it binds directly near the 3'-end of the 23S rRNA, where it nucleates assembly of the 50S subunit. The sequence is that of Large ribosomal subunit protein uL3 from Chloroherpeton thalassium (strain ATCC 35110 / GB-78).